The primary structure comprises 539 residues: Acid-sensing ion channel 4 (539 aa).

Residues 1 to 68 (MPIEIVCKIK…GPGPHGLRRT (68 aa)) lie on the Cytoplasmic side of the membrane. Residues 69-89 (LWALALLTSLAAFLYQAAGLA) traverse the membrane as a helical segment. Topologically, residues 90–438 (RGYLTRPHLV…EQRAAYGLSA (349 aa)) are extracellular. Disulfide bonds link C118–C202 and C180–C187. N-linked (GlcNAc...) asparagine glycans are attached at residues N191 and N243. 5 cysteine pairs are disulfide-bonded: C296/C375, C318/C371, C322/C369, C331/C353, and C333/C345. Residue N376 is glycosylated (N-linked (GlcNAc...) asparagine). The helical transmembrane segment at 439–459 (LLGDLGGQMGLFIGASILTLL) threads the bilayer. Residues 452 to 454 (GAS) carry the GAS motif; ion selectivity filter motif. At 460–539 (EILDYIYEVS…PGGLFEDFAC (80 aa)) the chain is on the cytoplasmic side. The disordered stretch occupies residues 501–531 (EQSPCPSRGRVEGGGVSSLLPNHHHPHGPPG).

The protein belongs to the amiloride-sensitive sodium channel (TC 1.A.6) family. ASIC4 subfamily. Homotrimer. Heterotrimer; with other ASIC proteins producing functional channels. Expressed in pituitary gland. Weakly expressed in brain, vestibular system and organ of Corti.

The protein resides in the cell membrane. In terms of biological role, does not exhibit measurable stand-alone pH-gated sodium channel activity but may form pH-gated heterotrimeric sodium channels. Its activity could also depend on alternative gating mechanisms. This is Acid-sensing ion channel 4 from Homo sapiens (Human).